A 354-amino-acid chain; its full sequence is Hyaluronan and proteoglycan link protein 1 (354 aa).

The propeptide occupies 1 to 9 (MRSLLFLVL). The Ig-like V-type domain maps to 38-152 (PRLLVEAEQA…EGLEDDTAVV (115 aa)). An N-linked (GlcNAc...) asparagine glycan is attached at asparagine 56. 5 disulfide bridges follow: cysteine 61/cysteine 139, cysteine 181/cysteine 252, cysteine 205/cysteine 226, cysteine 279/cysteine 349, and cysteine 304/cysteine 325. Link domains lie at 159 to 254 (VVFP…FCFT) and 259 to 351 (GRFY…YCFR).

Belongs to the HAPLN family.

The protein resides in the secreted. It localises to the extracellular space. It is found in the extracellular matrix. In terms of biological role, stabilizes the aggregates of proteoglycan monomers with hyaluronic acid in the extracellular cartilage matrix. This Rattus norvegicus (Rat) protein is Hyaluronan and proteoglycan link protein 1 (Hapln1).